The chain runs to 209 residues: Thymidylate kinase (209 aa).

10-17 (GLEGAGKS) contacts ATP.

It belongs to the thymidylate kinase family.

It catalyses the reaction dTMP + ATP = dTDP + ADP. Its function is as follows. Phosphorylation of dTMP to form dTDP in both de novo and salvage pathways of dTTP synthesis. The sequence is that of Thymidylate kinase from Photobacterium profundum (strain SS9).